The chain runs to 338 residues: Lipoate-protein ligase A (338 aa).

Residues proline 29 to valine 216 form the BPL/LPL catalytic domain. Residues arginine 71, glycine 76 to phenylalanine 79, and lysine 134 contribute to the ATP site. Lysine 134 contributes to the (R)-lipoate binding site.

Belongs to the LplA family. In terms of assembly, monomer.

The protein localises to the cytoplasm. The catalysed reaction is L-lysyl-[lipoyl-carrier protein] + (R)-lipoate + ATP = N(6)-[(R)-lipoyl]-L-lysyl-[lipoyl-carrier protein] + AMP + diphosphate + H(+). Its pathway is protein modification; protein lipoylation via exogenous pathway; protein N(6)-(lipoyl)lysine from lipoate: step 1/2. It participates in protein modification; protein lipoylation via exogenous pathway; protein N(6)-(lipoyl)lysine from lipoate: step 2/2. Its function is as follows. Catalyzes both the ATP-dependent activation of exogenously supplied lipoate to lipoyl-AMP and the transfer of the activated lipoyl onto the lipoyl domains of lipoate-dependent enzymes. This Salmonella dublin (strain CT_02021853) protein is Lipoate-protein ligase A.